We begin with the raw amino-acid sequence, 95 residues long: Large ribosomal subunit protein uL23 (95 aa).

It belongs to the universal ribosomal protein uL23 family. As to quaternary structure, part of the 50S ribosomal subunit. Contacts protein L29, and trigger factor when it is bound to the ribosome.

Its function is as follows. One of the early assembly proteins it binds 23S rRNA. One of the proteins that surrounds the polypeptide exit tunnel on the outside of the ribosome. Forms the main docking site for trigger factor binding to the ribosome. In Bacillus licheniformis (strain ATCC 14580 / DSM 13 / JCM 2505 / CCUG 7422 / NBRC 12200 / NCIMB 9375 / NCTC 10341 / NRRL NRS-1264 / Gibson 46), this protein is Large ribosomal subunit protein uL23.